The chain runs to 309 residues: Glutaminase (309 aa).

Substrate contacts are provided by S64, N114, E160, N167, Y191, Y243, and V261.

This sequence belongs to the glutaminase family. Homotetramer.

The catalysed reaction is L-glutamine + H2O = L-glutamate + NH4(+). This chain is Glutaminase, found in Methylobacterium sp. (strain 4-46).